Here is a 337-residue protein sequence, read N- to C-terminus: uncharacterized protein (337 aa).

A run of 2 helical transmembrane segments spans residues 241 to 261 and 273 to 293; these read FTLL…GAFI and ASLI…IGII.

Belongs to the glycosyltransferase 2 family.

The protein localises to the cell membrane. This is an uncharacterized protein from Bacillus subtilis (strain 168).